The sequence spans 64 residues: Large ribosomal subunit protein bL35 (64 aa).

The disordered stretch occupies residues 1–64 (MPKNKTNSGA…RKSIKKLLGK (64 aa)).

It belongs to the bacterial ribosomal protein bL35 family.

The sequence is that of Large ribosomal subunit protein bL35 from Beutenbergia cavernae (strain ATCC BAA-8 / DSM 12333 / CCUG 43141 / JCM 11478 / NBRC 16432 / NCIMB 13614 / HKI 0122).